Here is a 179-residue protein sequence, read N- to C-terminus: MSRIGLKPIEVPQGVEITVDEKNIVTVKGPNGQLSEKIHRDITVETEANVINVVRPTENKKHKSLHGLSRTLVANMVEGVTKGYEKKLELVGVGYRATMQGKKLVLSLGFSHPVEIDQPEGLTIEVPSQTQVTVKGIDKQQVGNFAAKIREYRKPEPYKGKGVRYAGEVVRRKEGKTGK.

Belongs to the universal ribosomal protein uL6 family. In terms of assembly, part of the 50S ribosomal subunit.

Its function is as follows. This protein binds to the 23S rRNA, and is important in its secondary structure. It is located near the subunit interface in the base of the L7/L12 stalk, and near the tRNA binding site of the peptidyltransferase center. The polypeptide is Large ribosomal subunit protein uL6 (Alkaliphilus metalliredigens (strain QYMF)).